The sequence spans 643 residues: Cytoplasmic dynein 1 intermediate chain 1 (643 aa).

2 stretches are compositionally biased toward basic and acidic residues: residues 1–13 (MSDK…ELER) and 20–60 (QIRE…RETE). Disordered stretches follow at residues 1–65 (MSDK…LLQS) and 96–123 (MSPS…RTLQ). S2 carries the post-translational modification N-acetylserine. The segment at 2 to 123 (SDKSDLKAEL…DLGPLTRTLQ (122 aa)) is interaction with DCTN1. Phosphoserine is present on residues S50 and S100. The segment covering 96-107 (MSPSSKSVSTPS) has biased composition (low complexity). T105 is modified (phosphothreonine). Phosphoserine occurs at positions 107 and 111. Residues 145-161 (KLGVSKVTQVDFLPREV) are interaction with DYNLT1. Positions 167–219 (ETQTPLATHQSEEDEEDEEMVEPKVGHDSELENQDKKQETKEAPPRELTEEEK) are disordered. T174 is modified (phosphothreonine). Residues S177 and S195 each carry the phosphoserine modification. Over residues 187 to 219 (VEPKVGHDSELENQDKKQETKEAPPRELTEEEK) the composition is skewed to basic and acidic residues. WD repeat units lie at residues 283-332 (SKHR…TTPE), 336-376 (HCQS…RTPV), 385-426 (AHTH…TPQE), 435-475 (SKPV…AGIG), 480-525 (GHQG…PLYS), 528-568 (DNAD…EVPT), and 574-613 (EGAY…VPHN). Phosphoserine is present on S633.

This sequence belongs to the dynein intermediate chain family. As to quaternary structure, homodimer. The cytoplasmic dynein 1 complex consists of two catalytic heavy chains (HCs) and a number of non-catalytic subunits presented by intermediate chains (ICs), light intermediate chains (LICs) and light chains (LCs); the composition seems to vary in respect to the IC, LIC and LC composition. The heavy chain homodimer serves as a scaffold for the probable homodimeric assembly of the respective non-catalytic subunits. The ICs and LICs bind directly to the HC dimer and the LCs assemble on the IC dimer. Isoform 1, isoform 2 and isoform 3 interact with DYNC1H1. Isoform 1, isoform 2 and isoform 3 interact with DYNLT3. Isoform 1, isoform 2 and isoform 3 interact with DYNLT1. Interacts with DCTN1. Interacts with MCRS1; the interaction is required for the proper distribution of centriolar satellites. In terms of tissue distribution, high levels seen in the brain and testis, while a lower level expression is seen in the liver, spleen, kidney, lung, skeletal muscle and heart.

It localises to the cytoplasm. The protein localises to the chromosome. The protein resides in the centromere. It is found in the kinetochore. Its subcellular location is the cytoskeleton. It localises to the spindle pole. Its function is as follows. Acts as one of several non-catalytic accessory components of the cytoplasmic dynein 1 complex that are thought to be involved in linking dynein to cargos and to adapter proteins that regulate dynein function. Cytoplasmic dynein 1 acts as a motor for the intracellular retrograde motility of vesicles and organelles along microtubules. The intermediate chains mediate the binding of dynein to dynactin via its 150 kDa component (p150-glued) DCTN1. May play a role in mediating the interaction of cytoplasmic dynein with membranous organelles and kinetochores. In Rattus norvegicus (Rat), this protein is Cytoplasmic dynein 1 intermediate chain 1 (Dync1i1).